The sequence spans 121 residues: Small ribosomal subunit protein uS13 (121 aa).

The interval 91–121 (HRMSLPVRGQRTRTNARTRRGSRKTVAGRKK) is disordered. Residues 100–121 (QRTRTNARTRRGSRKTVAGRKK) are compositionally biased toward basic residues.

This sequence belongs to the universal ribosomal protein uS13 family. As to quaternary structure, part of the 30S ribosomal subunit. Forms a loose heterodimer with protein S19. Forms two bridges to the 50S subunit in the 70S ribosome.

Located at the top of the head of the 30S subunit, it contacts several helices of the 16S rRNA. In the 70S ribosome it contacts the 23S rRNA (bridge B1a) and protein L5 of the 50S subunit (bridge B1b), connecting the 2 subunits; these bridges are implicated in subunit movement. Contacts the tRNAs in the A and P-sites. The sequence is that of Small ribosomal subunit protein uS13 from Prochlorococcus marinus (strain AS9601).